Here is a 468-residue protein sequence, read N- to C-terminus: ATP synthase subunit beta (468 aa).

Residue 155-162 coordinates ATP; the sequence is GGAGVGKT.

This sequence belongs to the ATPase alpha/beta chains family. As to quaternary structure, F-type ATPases have 2 components, CF(1) - the catalytic core - and CF(0) - the membrane proton channel. CF(1) has five subunits: alpha(3), beta(3), gamma(1), delta(1), epsilon(1). CF(0) has three main subunits: a(1), b(2) and c(9-12). The alpha and beta chains form an alternating ring which encloses part of the gamma chain. CF(1) is attached to CF(0) by a central stalk formed by the gamma and epsilon chains, while a peripheral stalk is formed by the delta and b chains.

It localises to the cell membrane. It catalyses the reaction ATP + H2O + 4 H(+)(in) = ADP + phosphate + 5 H(+)(out). Functionally, produces ATP from ADP in the presence of a proton gradient across the membrane. The catalytic sites are hosted primarily by the beta subunits. This is ATP synthase subunit beta from Streptococcus suis (strain 98HAH33).